A 256-amino-acid polypeptide reads, in one-letter code: uncharacterized protein (256 aa).

The NADP(+) site is built by I18, S37, K46, D66, Y164, K168, V197, and T199. Y164 (proton donor) is an active-site residue. K168 serves as the catalytic Lowers pKa of active site Tyr.

This sequence belongs to the short-chain dehydrogenases/reductases (SDR) family.

The protein localises to the cytoplasm. This is an uncharacterized protein from Saccharomyces cerevisiae (strain ATCC 204508 / S288c) (Baker's yeast).